Reading from the N-terminus, the 108-residue chain is L-rhamnose mutarotase (108 aa).

Residue tyrosine 18 coordinates substrate. Catalysis depends on histidine 22, which acts as the Proton donor. Substrate-binding positions include tyrosine 41 and 76–77 (WW).

Belongs to the rhamnose mutarotase family. In terms of assembly, homodimer.

Its subcellular location is the cytoplasm. The catalysed reaction is alpha-L-rhamnose = beta-L-rhamnose. It functions in the pathway carbohydrate metabolism; L-rhamnose metabolism. Involved in the anomeric conversion of L-rhamnose. This is L-rhamnose mutarotase from Paraburkholderia phymatum (strain DSM 17167 / CIP 108236 / LMG 21445 / STM815) (Burkholderia phymatum).